The sequence spans 343 residues: S-adenosylmethionine:tRNA ribosyltransferase-isomerase (343 aa).

The protein belongs to the QueA family. Monomer.

It is found in the cytoplasm. It catalyses the reaction 7-aminomethyl-7-carbaguanosine(34) in tRNA + S-adenosyl-L-methionine = epoxyqueuosine(34) in tRNA + adenine + L-methionine + 2 H(+). It functions in the pathway tRNA modification; tRNA-queuosine biosynthesis. In terms of biological role, transfers and isomerizes the ribose moiety from AdoMet to the 7-aminomethyl group of 7-deazaguanine (preQ1-tRNA) to give epoxyqueuosine (oQ-tRNA). The chain is S-adenosylmethionine:tRNA ribosyltransferase-isomerase from Coxiella burnetii (strain RSA 331 / Henzerling II).